Consider the following 65-residue polypeptide: VVYTDCTESGQNLCLCQDSNVCGQGNKCILGSNGEKNQCVTGEGTPKPQSHNDGDFEEIPEEYLQ.

The tract at residues 1–3 (VVY) is interaction with thrombin active site. 3 cysteine pairs are disulfide-bonded: Cys-6-Cys-14, Cys-16-Cys-28, and Cys-22-Cys-39. The segment at 40–65 (VTGEGTPKPQSHNDGDFEEIPEEYLQ) is disordered. Thr-45 carries an O-linked (GalNAc...) threonine glycan. An interaction with fibrinogen-binding exosite of thrombin region spans residues 55–65 (DFEEIPEEYLQ). Acidic residues predominate over residues 55-65 (DFEEIPEEYLQ). Tyr-63 is modified (sulfotyrosine).

The protein belongs to the protease inhibitor I14 (hirudin) family.

It localises to the secreted. Its function is as follows. Hirudin is a potent thrombin-specific protease inhibitor. It forms a stable non-covalent complex with alpha-thrombin, thereby abolishing its ability to cleave fibrinogen. This is Hirudin-3B from Hirudo medicinalis (Medicinal leech).